The sequence spans 162 residues: Peptide methionine sulfoxide reductase MsrA (162 aa).

The active site involves cysteine 10.

The protein belongs to the MsrA Met sulfoxide reductase family.

It catalyses the reaction L-methionyl-[protein] + [thioredoxin]-disulfide + H2O = L-methionyl-(S)-S-oxide-[protein] + [thioredoxin]-dithiol. It carries out the reaction [thioredoxin]-disulfide + L-methionine + H2O = L-methionine (S)-S-oxide + [thioredoxin]-dithiol. Has an important function as a repair enzyme for proteins that have been inactivated by oxidation. Catalyzes the reversible oxidation-reduction of methionine sulfoxide in proteins to methionine. The sequence is that of Peptide methionine sulfoxide reductase MsrA from Clostridium acetobutylicum (strain ATCC 824 / DSM 792 / JCM 1419 / IAM 19013 / LMG 5710 / NBRC 13948 / NRRL B-527 / VKM B-1787 / 2291 / W).